A 475-amino-acid polypeptide reads, in one-letter code: tRNA (guanine(37)-N(1))-methyltransferase (475 aa).

Residues His219, 258–259, and 286–287 each bind S-adenosyl-L-methionine; these read DL and DG. Residues 306 to 328 form a disordered region; it reads KITKQKPTSNDKKRNRKVESPTV. Asn349 serves as a coordination point for S-adenosyl-L-methionine. Residues 456 to 469 show a composition bias toward polar residues; that stretch reads NLVSQSDVSKSSDN. The disordered stretch occupies residues 456-475; sequence NLVSQSDVSKSSDNILEKDT.

The protein belongs to the class I-like SAM-binding methyltransferase superfamily. TRM5/TYW2 family. In terms of assembly, monomer.

It is found in the mitochondrion matrix. The protein localises to the nucleus. Its subcellular location is the cytoplasm. It carries out the reaction guanosine(37) in tRNA + S-adenosyl-L-methionine = N(1)-methylguanosine(37) in tRNA + S-adenosyl-L-homocysteine + H(+). Functionally, specifically methylates the N1 position of guanosine-37 in various cytoplasmic and mitochondrial tRNAs. Methylation is not dependent on the nature of the nucleoside 5' of the target nucleoside. This is the first step in the biosynthesis of wybutosine (yW), a modified base adjacent to the anticodon of tRNAs and required for accurate decoding. The polypeptide is tRNA (guanine(37)-N(1))-methyltransferase (Batrachochytrium dendrobatidis (strain JAM81 / FGSC 10211) (Frog chytrid fungus)).